Consider the following 395-residue polypeptide: Succinyl-diaminopimelate desuccinylase (395 aa).

Zn(2+) is bound at residue H74. D76 is an active-site residue. Residue D107 participates in Zn(2+) binding. E141 functions as the Proton acceptor in the catalytic mechanism. The Zn(2+) site is built by E142, E170, and H368.

The protein belongs to the peptidase M20A family. DapE subfamily. In terms of assembly, homodimer. It depends on Zn(2+) as a cofactor. Co(2+) serves as cofactor.

It carries out the reaction N-succinyl-(2S,6S)-2,6-diaminopimelate + H2O = (2S,6S)-2,6-diaminopimelate + succinate. It functions in the pathway amino-acid biosynthesis; L-lysine biosynthesis via DAP pathway; LL-2,6-diaminopimelate from (S)-tetrahydrodipicolinate (succinylase route): step 3/3. In terms of biological role, catalyzes the hydrolysis of N-succinyl-L,L-diaminopimelic acid (SDAP), forming succinate and LL-2,6-diaminopimelate (DAP), an intermediate involved in the bacterial biosynthesis of lysine and meso-diaminopimelic acid, an essential component of bacterial cell walls. The polypeptide is Succinyl-diaminopimelate desuccinylase (Chelativorans sp. (strain BNC1)).